Reading from the N-terminus, the 398-residue chain is 1-deoxy-D-xylulose 5-phosphate reductoisomerase (398 aa).

NADPH-binding residues include Thr-11, Gly-12, Ser-13, Ile-14, Arg-38, Asn-39, and Asn-125. Lys-126 contacts 1-deoxy-D-xylulose 5-phosphate. Glu-127 provides a ligand contact to NADPH. Asp-151 contacts Mn(2+). 1-deoxy-D-xylulose 5-phosphate-binding residues include Ser-152, Glu-153, Ser-179, and His-202. Glu-153 provides a ligand contact to Mn(2+). Position 208 (Gly-208) interacts with NADPH. Positions 215, 220, 221, and 224 each coordinate 1-deoxy-D-xylulose 5-phosphate. Glu-224 contributes to the Mn(2+) binding site.

Belongs to the DXR family. Mg(2+) serves as cofactor. Requires Mn(2+) as cofactor.

It carries out the reaction 2-C-methyl-D-erythritol 4-phosphate + NADP(+) = 1-deoxy-D-xylulose 5-phosphate + NADPH + H(+). It participates in isoprenoid biosynthesis; isopentenyl diphosphate biosynthesis via DXP pathway; isopentenyl diphosphate from 1-deoxy-D-xylulose 5-phosphate: step 1/6. Catalyzes the NADPH-dependent rearrangement and reduction of 1-deoxy-D-xylulose-5-phosphate (DXP) to 2-C-methyl-D-erythritol 4-phosphate (MEP). This chain is 1-deoxy-D-xylulose 5-phosphate reductoisomerase, found in Burkholderia lata (strain ATCC 17760 / DSM 23089 / LMG 22485 / NCIMB 9086 / R18194 / 383).